A 36-amino-acid polypeptide reads, in one-letter code: Pancreatic polypeptide (36 aa).

Residue Phe-36 is modified to Phenylalanine amide.

This sequence belongs to the NPY family.

It localises to the secreted. Functionally, hormone secreted by pancreatic cells that acts as a regulator of pancreatic and gastrointestinal functions. The sequence is that of Pancreatic polypeptide (ppy) from Alligator mississippiensis (American alligator).